Reading from the N-terminus, the 310-residue chain is uncharacterized protein (310 aa).

Helical transmembrane passes span 1-21, 38-58, 74-94, 110-130, 135-155, 194-214, 228-248, 256-276, and 284-304; these read MIYFFISSLFFLILITLMFSK, FFFYFLLFVLFIFIFWLVVYT, TSYFLEILLSIDNVFAWFFIF, YGLWGALILRSIFSFSGSFLF, WILYLFGGFFILTSLKFIFFS, IFITPLFVSLILIELSDIVFS, LFIIFSSNFFAVLGLRSMYLF, FPIMKYALSLILMFIGFKILI, and IFLTLAVILIILITTFLINLI.

This sequence belongs to the TerC family.

It localises to the cell membrane. This is an uncharacterized protein from Buchnera aphidicola subsp. Schizaphis graminum (strain Sg).